Reading from the N-terminus, the 508-residue chain is Nucleolar complex protein 4 homolog (508 aa).

3 helical membrane passes run 288 to 308 (VAYG…FILI), 341 to 361 (HLAD…AAFI), and 367 to 387 (LALT…CNLF).

This sequence belongs to the CBF/MAK21 family.

The protein localises to the nucleus membrane. It is found in the nucleus. Its subcellular location is the nucleolus. The protein is Nucleolar complex protein 4 homolog (NOC4L) of Gallus gallus (Chicken).